The sequence spans 826 residues: Capsid-associated protein Vp91 (826 aa).

Positions 1–18 are cleaved as a signal peptide; the sequence is MSDVVLLVLAIIFIIIFV. The C2HC BV-type zinc finger occupies 147–196; it reads CVPINPCDTRAPGLYAMDEHLLDALVHSQHLDKDYTINAHLQHPTLYLRC. Cystine bridges form between Cys-207–Cys-220 and Cys-260–Cys-273. An N-linked (GlcNAc...) asparagine; by host glycan is attached at Asn-210. Residues 223-281 enclose the Chitin-binding type-2 domain; sequence NELCQGRPDGYVLDYFPETLLVNEFVECYESKHVVKQCPEQHVFDRQLMTCVQAHPCAF. N-linked (GlcNAc...) asparagine; by host glycans are attached at residues Asn-333, Asn-371, Asn-413, Asn-510, Asn-520, and Asn-609. The tract at residues 651–679 is disordered; sequence GDGDHWGPDLPPPVQPDSEPDESEPEPEV. Residues 668–677 are compositionally biased toward acidic residues; that stretch reads SEPDESEPEP. An N-linked (GlcNAc...) asparagine; by host glycan is attached at Asn-722.

The protein resides in the virion. Functionally, probable capsid-associated protein. The chain is Capsid-associated protein Vp91 from Epiphyas postvittana nucleopolyhedrovirus (EppoMNPV).